The chain runs to 111 residues: Aspartate 1-decarboxylase (111 aa).

Catalysis depends on S25, which acts as the Schiff-base intermediate with substrate; via pyruvic acid. S25 carries the post-translational modification Pyruvic acid (Ser). T57 lines the substrate pocket. The Proton donor role is filled by Y58. Position 73 to 75 (73 to 75 (GPA)) interacts with substrate.

The protein belongs to the PanD family. Heterooctamer of four alpha and four beta subunits. Pyruvate serves as cofactor. In terms of processing, is synthesized initially as an inactive proenzyme, which is activated by self-cleavage at a specific serine bond to produce a beta-subunit with a hydroxyl group at its C-terminus and an alpha-subunit with a pyruvoyl group at its N-terminus.

The protein localises to the cytoplasm. It carries out the reaction L-aspartate + H(+) = beta-alanine + CO2. The protein operates within cofactor biosynthesis; (R)-pantothenate biosynthesis; beta-alanine from L-aspartate: step 1/1. Catalyzes the pyruvoyl-dependent decarboxylation of aspartate to produce beta-alanine. The protein is Aspartate 1-decarboxylase of Francisella tularensis subsp. novicida (strain U112).